The chain runs to 113 residues: Biotrophy-associated secreted protein 3 (113 aa).

The signal sequence occupies residues Met1–Ala20.

Its subcellular location is the secreted. Its function is as follows. Secreted effector involved in biotrophic colonization of plant cells. The chain is Biotrophy-associated secreted protein 3 from Pyricularia oryzae (strain 70-15 / ATCC MYA-4617 / FGSC 8958) (Rice blast fungus).